The sequence spans 228 residues: Phosphatidate cytidylyltransferase (228 aa).

6 consecutive transmembrane segments (helical) span residues 31-51 (FVIAILCLKTLFYILMILVGL), 65-85 (INYLLIGLIIIPIPISLLIFL), 93-113 (LVIMLYFCILWSVDTFAMIGG), 131-151 (WTGLITGTVSAGLVSVLVSLI), 165-185 (IYLFIISCILALIAQSSDLFI), and 206-226 (GVLDRFDSIILTAPVFFCINI).

It belongs to the CDS family.

Its subcellular location is the cell membrane. The catalysed reaction is a 1,2-diacyl-sn-glycero-3-phosphate + CTP + H(+) = a CDP-1,2-diacyl-sn-glycerol + diphosphate. The protein operates within phospholipid metabolism; CDP-diacylglycerol biosynthesis; CDP-diacylglycerol from sn-glycerol 3-phosphate: step 3/3. The protein is Phosphatidate cytidylyltransferase (cdsA) of Rickettsia prowazekii (strain Madrid E).